We begin with the raw amino-acid sequence, 176 residues long: Peptide methionine sulfoxide reductase MsrA (176 aa).

Cysteine 14 is an active-site residue.

This sequence belongs to the MsrA Met sulfoxide reductase family.

It catalyses the reaction L-methionyl-[protein] + [thioredoxin]-disulfide + H2O = L-methionyl-(S)-S-oxide-[protein] + [thioredoxin]-dithiol. The catalysed reaction is [thioredoxin]-disulfide + L-methionine + H2O = L-methionine (S)-S-oxide + [thioredoxin]-dithiol. Has an important function as a repair enzyme for proteins that have been inactivated by oxidation. Catalyzes the reversible oxidation-reduction of methionine sulfoxide in proteins to methionine. This is Peptide methionine sulfoxide reductase MsrA from Halalkalibacterium halodurans (strain ATCC BAA-125 / DSM 18197 / FERM 7344 / JCM 9153 / C-125) (Bacillus halodurans).